A 158-amino-acid chain; its full sequence is NAD(P)H-quinone oxidoreductase subunit N (158 aa).

This sequence belongs to the complex I NdhN subunit family. As to quaternary structure, NDH-1 can be composed of about 15 different subunits; different subcomplexes with different compositions have been identified which probably have different functions.

It localises to the cellular thylakoid membrane. It catalyses the reaction a plastoquinone + NADH + (n+1) H(+)(in) = a plastoquinol + NAD(+) + n H(+)(out). It carries out the reaction a plastoquinone + NADPH + (n+1) H(+)(in) = a plastoquinol + NADP(+) + n H(+)(out). NDH-1 shuttles electrons from an unknown electron donor, via FMN and iron-sulfur (Fe-S) centers, to quinones in the respiratory and/or the photosynthetic chain. The immediate electron acceptor for the enzyme in this species is believed to be plastoquinone. Couples the redox reaction to proton translocation, and thus conserves the redox energy in a proton gradient. Cyanobacterial NDH-1 also plays a role in inorganic carbon-concentration. This Prochlorococcus marinus (strain MIT 9215) protein is NAD(P)H-quinone oxidoreductase subunit N.